Here is a 593-residue protein sequence, read N- to C-terminus: DNA topoisomerase I, mitochondrial (593 aa).

The transit peptide at M1–S43 directs the protein to the mitochondrion. Interaction with DNA stretches follow at residues K254 to Y255, R317 to K322, and T414 to K416. Residues S261–F593 enclose the Topo IB-type catalytic domain. Y551 (O-(3'-phospho-DNA)-tyrosine intermediate) is an active-site residue.

The protein belongs to the type IB topoisomerase family. Requires Ca(2+) as cofactor. Mg(2+) is required as a cofactor.

The protein localises to the mitochondrion. The catalysed reaction is ATP-independent breakage of single-stranded DNA, followed by passage and rejoining.. Functionally, releases the supercoiling and torsional tension of DNA introduced during duplication of mitochondrial DNA by transiently cleaving and rejoining one strand of the DNA duplex. Introduces a single-strand break via transesterification at a target site in duplex DNA. The scissile phosphodiester is attacked by the catalytic tyrosine of the enzyme, resulting in the formation of a DNA-(3'-phosphotyrosyl)-enzyme intermediate and the expulsion of a 5'-OH DNA strand. The free DNA strand then rotates around the intact phosphodiester bond on the opposing strand, thus removing DNA supercoils. Finally, in the religation step, the DNA 5'-OH attacks the covalent intermediate to expel the active-site tyrosine and restore the DNA phosphodiester backbone. The polypeptide is DNA topoisomerase I, mitochondrial (Top1mt) (Rattus norvegicus (Rat)).